The chain runs to 112 residues: Large ribosomal subunit protein eL22 (112 aa).

The protein belongs to the eukaryotic ribosomal protein eL22 family. Component of the large ribosomal subunit.

It is found in the cytoplasm. The sequence is that of Large ribosomal subunit protein eL22 (RPL22) from Encephalitozoon cuniculi (strain GB-M1) (Microsporidian parasite).